A 309-amino-acid polypeptide reads, in one-letter code: Sporulation sigma-E factor-processing peptidase (309 aa).

The next 5 helical transmembrane spans lie at 7-27 (VIWL…AFIL), 36-55 (LVGG…TPFS), 61-78 (PAGK…TFGF), 88-105 (LFSF…IIGA), and 130-147 (PISW…WFFS). Aspartate 183 is a catalytic residue.

This sequence belongs to the peptidase U4 family. Self-associates. Interacts with SigE. Interacts with SpoIIR.

The protein resides in the cell membrane. Functionally, probable aspartic protease that is responsible for the proteolytic cleavage of the RNA polymerase sigma E factor (SigE/spoIIGB) to yield the active peptide in the mother cell during sporulation. Responds to a signal from the forespore that is triggered by the extracellular signal protein SpoIIR. In Bacillus subtilis (strain 168), this protein is Sporulation sigma-E factor-processing peptidase (spoIIGA).